The primary structure comprises 140 residues: MLKTISPLISPELLKVLAEMGHGDEIIFSDAHFPAHSMGPQVIRADGLRVSDLLQAIIPLFELDSYAPPVVMMAAVEGDALDPTVEQRYRQALSTQAPCPDIVRIDRFAFYDRAQKAFAIVITGECAKYGNILLKKGVTP.

Residue His-22 is the Proton donor of the active site. Substrate is bound by residues Asp-30, Arg-107, and 129–131 (YGN).

Belongs to the RbsD / FucU family. FucU mutarotase subfamily. Homodecamer.

It localises to the cytoplasm. The catalysed reaction is alpha-L-fucose = beta-L-fucose. Its pathway is carbohydrate metabolism; L-fucose metabolism. Functionally, involved in the anomeric conversion of L-fucose. This is L-fucose mutarotase from Klebsiella pneumoniae subsp. pneumoniae (strain ATCC 700721 / MGH 78578).